The sequence spans 430 residues: Serine--tRNA ligase (430 aa).

Thr-231–Glu-233 lines the L-serine pocket. Arg-262–Glu-264 contacts ATP. Glu-285 contacts L-serine. Glu-349 to Ser-352 contributes to the ATP binding site. Ser-385 provides a ligand contact to L-serine.

This sequence belongs to the class-II aminoacyl-tRNA synthetase family. Type-1 seryl-tRNA synthetase subfamily. As to quaternary structure, homodimer. The tRNA molecule binds across the dimer.

The protein resides in the cytoplasm. It catalyses the reaction tRNA(Ser) + L-serine + ATP = L-seryl-tRNA(Ser) + AMP + diphosphate + H(+). The enzyme catalyses tRNA(Sec) + L-serine + ATP = L-seryl-tRNA(Sec) + AMP + diphosphate + H(+). It participates in aminoacyl-tRNA biosynthesis; selenocysteinyl-tRNA(Sec) biosynthesis; L-seryl-tRNA(Sec) from L-serine and tRNA(Sec): step 1/1. In terms of biological role, catalyzes the attachment of serine to tRNA(Ser). Is also able to aminoacylate tRNA(Sec) with serine, to form the misacylated tRNA L-seryl-tRNA(Sec), which will be further converted into selenocysteinyl-tRNA(Sec). In Roseobacter denitrificans (strain ATCC 33942 / OCh 114) (Erythrobacter sp. (strain OCh 114)), this protein is Serine--tRNA ligase.